The chain runs to 297 residues: tRNA dimethylallyltransferase (297 aa).

Gly15 to Ser22 is a binding site for ATP. Thr17–Ser22 provides a ligand contact to substrate. Interaction with substrate tRNA regions lie at residues Asp40–Gln43 and Gln164–Arg168.

Belongs to the IPP transferase family. As to quaternary structure, monomer. Mg(2+) serves as cofactor.

It carries out the reaction adenosine(37) in tRNA + dimethylallyl diphosphate = N(6)-dimethylallyladenosine(37) in tRNA + diphosphate. Catalyzes the transfer of a dimethylallyl group onto the adenine at position 37 in tRNAs that read codons beginning with uridine, leading to the formation of N6-(dimethylallyl)adenosine (i(6)A). The polypeptide is tRNA dimethylallyltransferase (Rhizobium leguminosarum bv. trifolii (strain WSM2304)).